Consider the following 671-residue polypeptide: Probable potassium transport system protein Kup 2 (671 aa).

The next 12 helical transmembrane spans lie at 18–38 (GFLIALGIVYGDIGTSPLYAM), 60–80 (VSLVIWTLTLITTVKYVLIAL), 103–123 (WLIVPAMIGGATLLADGALTP), 149–169 (VTTLIILAFLFLIQRFGASLV), 173–193 (FGPIMFIWFGFLGVSGLINSF), 218–238 (AGFFILGSIFLVTTGAEALYS), 252–272 (WPFVKICIILSYCGQGAWLLA), 292–312 (MVIYVVILSTLAAIIASQALI), 343–363 (LYIPAVNFALWVTTSFFVLYF), 373–393 (YSLAITITMLMTTTLLTYFLI), 402–422 (IAFISIGLFCIEGSFFAASLV), and 424–444 (FINGAYIVVLIALAIIFVMFI).

This sequence belongs to the HAK/KUP transporter (TC 2.A.72) family.

It is found in the cell membrane. The catalysed reaction is K(+)(in) + H(+)(in) = K(+)(out) + H(+)(out). Functionally, transport of potassium into the cell. Likely operates as a K(+):H(+) symporter. The polypeptide is Probable potassium transport system protein Kup 2 (Lactococcus lactis subsp. cremoris (strain SK11)).